We begin with the raw amino-acid sequence, 621 residues long: Anthranilate synthase alpha subunit 2, chloroplastic (621 aa).

The N-terminal 87 residues, 1–87, are a transit peptide targeting the chloroplast; that stretch reads MSAVSISAVK…SEEQFTKFKK (87 aa).

Belongs to the anthranilate synthase component I family. In terms of assembly, heterotetramer consisting of two non-identical subunits: a beta subunit and a large alpha subunit.

It is found in the plastid. The protein resides in the chloroplast. The catalysed reaction is chorismate + L-glutamine = anthranilate + pyruvate + L-glutamate + H(+). It participates in amino-acid biosynthesis; L-tryptophan biosynthesis; L-tryptophan from chorismate: step 1/5. Feedback inhibition by tryptophan. Its function is as follows. Part of a heterotetrameric complex that catalyzes the two-step biosynthesis of anthranilate, an intermediate in the biosynthesis of L-tryptophan. In the first step, the glutamine-binding beta subunit of anthranilate synthase (AS) provides the glutamine amidotransferase activity which generates ammonia as a substrate that, along with chorismate, is used in the second step, catalyzed by the large alpha subunit of AS to produce anthranilate. This is Anthranilate synthase alpha subunit 2, chloroplastic (ASA2) from Arabidopsis thaliana (Mouse-ear cress).